The following is a 329-amino-acid chain: GTP 3',8-cyclase (329 aa).

One can recognise a Radical SAM core domain in the interval 8–234 (AFARKFYYLR…QLRQRSDGPA (227 aa)). Residue arginine 17 coordinates GTP. [4Fe-4S] cluster contacts are provided by cysteine 24 and cysteine 28. Residue tyrosine 30 coordinates S-adenosyl-L-methionine. Residue cysteine 31 participates in [4Fe-4S] cluster binding. Arginine 68 lines the GTP pocket. Glycine 72 contacts S-adenosyl-L-methionine. Residue threonine 99 participates in GTP binding. An S-adenosyl-L-methionine-binding site is contributed by serine 123. Lysine 160 contacts GTP. Methionine 194 contacts S-adenosyl-L-methionine. Residues cysteine 257 and cysteine 260 each coordinate [4Fe-4S] cluster. Residue 262–264 (RLR) coordinates GTP. Cysteine 274 is a [4Fe-4S] cluster binding site.

It belongs to the radical SAM superfamily. MoaA family. As to quaternary structure, monomer and homodimer. [4Fe-4S] cluster serves as cofactor.

The catalysed reaction is GTP + AH2 + S-adenosyl-L-methionine = (8S)-3',8-cyclo-7,8-dihydroguanosine 5'-triphosphate + 5'-deoxyadenosine + L-methionine + A + H(+). It participates in cofactor biosynthesis; molybdopterin biosynthesis. Its function is as follows. Catalyzes the cyclization of GTP to (8S)-3',8-cyclo-7,8-dihydroguanosine 5'-triphosphate. The polypeptide is GTP 3',8-cyclase (Escherichia fergusonii (strain ATCC 35469 / DSM 13698 / CCUG 18766 / IAM 14443 / JCM 21226 / LMG 7866 / NBRC 102419 / NCTC 12128 / CDC 0568-73)).